A 501-amino-acid polypeptide reads, in one-letter code: Probable cytosol aminopeptidase (501 aa).

Residues K268 and D273 each contribute to the Mn(2+) site. K280 is a catalytic residue. Mn(2+)-binding residues include D291, D350, and E352. R354 is an active-site residue.

This sequence belongs to the peptidase M17 family. It depends on Mn(2+) as a cofactor.

The protein localises to the cytoplasm. The enzyme catalyses Release of an N-terminal amino acid, Xaa-|-Yaa-, in which Xaa is preferably Leu, but may be other amino acids including Pro although not Arg or Lys, and Yaa may be Pro. Amino acid amides and methyl esters are also readily hydrolyzed, but rates on arylamides are exceedingly low.. It carries out the reaction Release of an N-terminal amino acid, preferentially leucine, but not glutamic or aspartic acids.. Functionally, presumably involved in the processing and regular turnover of intracellular proteins. Catalyzes the removal of unsubstituted N-terminal amino acids from various peptides. The sequence is that of Probable cytosol aminopeptidase from Colwellia psychrerythraea (strain 34H / ATCC BAA-681) (Vibrio psychroerythus).